A 232-amino-acid chain; its full sequence is NAD(P)H-quinone oxidoreductase subunit K 1 (232 aa).

Residues C49, C50, C114, and C145 each coordinate [4Fe-4S] cluster.

The protein belongs to the complex I 20 kDa subunit family. In terms of assembly, NDH-1 can be composed of about 15 different subunits; different subcomplexes with different compositions have been identified which probably have different functions. Requires [4Fe-4S] cluster as cofactor.

It localises to the cell inner membrane. The enzyme catalyses a plastoquinone + NADH + (n+1) H(+)(in) = a plastoquinol + NAD(+) + n H(+)(out). The catalysed reaction is a plastoquinone + NADPH + (n+1) H(+)(in) = a plastoquinol + NADP(+) + n H(+)(out). In terms of biological role, NDH-1 shuttles electrons from an unknown electron donor, via FMN and iron-sulfur (Fe-S) centers, to quinones in the respiratory and/or the photosynthetic chain. The immediate electron acceptor for the enzyme in this species is believed to be plastoquinone. Couples the redox reaction to proton translocation, and thus conserves the redox energy in a proton gradient. Cyanobacterial NDH-1 also plays a role in inorganic carbon-concentration. The chain is NAD(P)H-quinone oxidoreductase subunit K 1 from Gloeobacter violaceus (strain ATCC 29082 / PCC 7421).